The chain runs to 288 residues: Zinc finger protein ZAT9 (288 aa).

The C2H2-type 1 zinc-finger motif lies at 4–26 (YKCRVCFKSFVNGKALGGHMRSH). 3 disordered regions span residues 20–82 (GGHM…LTRK), 101–123 (SQLG…DTTT), and 189–210 (GGHR…QRSE). Residues 37–52 (PSQLSYETESDVSSSD) are compositionally biased toward polar residues. 2 consecutive C2H2-type zinc fingers follow at residues 173-195 (YKCE…RASH) and 224-246 (HECP…KRSH).

The protein localises to the nucleus. In terms of biological role, probable transcription factor that may be involved in stress responses. This chain is Zinc finger protein ZAT9 (ZAT9), found in Arabidopsis thaliana (Mouse-ear cress).